Consider the following 109-residue polypeptide: Iron-sulfur cluster assembly protein CyaY (109 aa).

It belongs to the frataxin family.

Involved in iron-sulfur (Fe-S) cluster assembly. May act as a regulator of Fe-S biogenesis. The protein is Iron-sulfur cluster assembly protein CyaY of Bordetella pertussis (strain Tohama I / ATCC BAA-589 / NCTC 13251).